Consider the following 317-residue polypeptide: Putative ribose-phosphate pyrophosphokinase (317 aa).

The interval 211–224 (GRDVIVLDDEIAKG) is binding of phosphoribosylpyrophosphate.

Belongs to the ribose-phosphate pyrophosphokinase family.

The catalysed reaction is D-ribose 5-phosphate + ATP = 5-phospho-alpha-D-ribose 1-diphosphate + AMP + H(+). The chain is Putative ribose-phosphate pyrophosphokinase from Streptomyces coelicolor (strain ATCC BAA-471 / A3(2) / M145).